The following is a 350-amino-acid chain: Phenylalanine--tRNA ligase alpha subunit (350 aa).

Mg(2+) is bound at residue Glu271.

It belongs to the class-II aminoacyl-tRNA synthetase family. Phe-tRNA synthetase alpha subunit type 1 subfamily. Tetramer of two alpha and two beta subunits. Mg(2+) serves as cofactor.

It is found in the cytoplasm. It catalyses the reaction tRNA(Phe) + L-phenylalanine + ATP = L-phenylalanyl-tRNA(Phe) + AMP + diphosphate + H(+). This is Phenylalanine--tRNA ligase alpha subunit from Delftia acidovorans (strain DSM 14801 / SPH-1).